A 1976-amino-acid polypeptide reads, in one-letter code: Myosin-10 (1976 aa).

Arginine 18 carries the post-translational modification Omega-N-methylarginine. The Myosin N-terminal SH3-like domain maps to 31–81 (TAKKLVWIPSERHGFEAASIKEERGDEVLVELAENGKKAMVNKDDIQKMNP). The 699-residue stretch at 85 to 783 (SKVEDMAELT…VLAHLEEERD (699 aa)) folds into the Myosin motor domain. Position 178 to 185 (178 to 185 (GESGAGKT)) interacts with ATP. N6-acetyllysine is present on lysine 442. An actin-binding region spans residues 661-683 (LTKLMATLRNTNPNFVRCIIPNH). Positions 786-815 (ITDIIIFFQAVCRGYLARKAFAKKQQQLSA) constitute an IQ domain. Positions 845–1976 (LQVTRQEEEL…INETQPPQSE (1132 aa)) form a coiled coil. The tract at residues 1126 to 1149 (DFESEKASRNKAEKQKRDLSEELE) is disordered. Basic and acidic residues predominate over residues 1129–1149 (SEKASRNKAEKQKRDLSEELE). Serine 1145 carries the post-translational modification Phosphoserine. N6-acetyllysine is present on residues lysine 1241, lysine 1301, and lysine 1645. Disordered stretches follow at residues 1697–1718 (ASSERARRHAEQERDELADEIA) and 1874–1976 (KANA…PQSE). The segment covering 1698–1708 (SSERARRHAEQ) has biased composition (basic and acidic residues). The residue at position 1930 (arginine 1930) is an Omega-N-methylarginine. Serine 1935, serine 1937, serine 1938, and serine 1939 each carry phosphoserine. The residue at position 1940 (arginine 1940) is an Omega-N-methylarginine. Residues serine 1952 and serine 1956 each carry the phosphoserine modification. Threonine 1960 carries the phosphothreonine modification. Positions 1967–1976 (INETQPPQSE) are enriched in polar residues. Serine 1975 is subject to Phosphoserine.

Belongs to the TRAFAC class myosin-kinesin ATPase superfamily. Myosin family. Myosin is a hexameric protein that consists of 2 heavy chain subunits (MHC), 2 alkali light chain subunits (MLC) and 2 regulatory light chain subunits (MLC-2). Interacts with PLEKHG6. Interacts with ECPAS. Interacts with KIF26B. Interacts with LARP6. Interacts with MCC. Interacts with CFAP95. In terms of processing, phosphorylated by ABL2.

Its subcellular location is the cell projection. It localises to the lamellipodium. Its function is as follows. Cellular myosin that appears to play a role in cytokinesis, cell shape, and specialized functions such as secretion and capping. Involved with LARP6 in the stabilization of type I collagen mRNAs for CO1A1 and CO1A2. During cell spreading, plays an important role in cytoskeleton reorganization, focal contacts formation (in the central part but not the margins of spreading cells), and lamellipodial extension; this function is mechanically antagonized by MYH9. The protein is Myosin-10 (MYH10) of Bos taurus (Bovine).